Consider the following 144-residue polypeptide: Large ribosomal subunit protein uL16 (144 aa).

This sequence belongs to the universal ribosomal protein uL16 family. In terms of assembly, part of the 50S ribosomal subunit.

Binds 23S rRNA and is also seen to make contacts with the A and possibly P site tRNAs. This is Large ribosomal subunit protein uL16 from Novosphingobium aromaticivorans (strain ATCC 700278 / DSM 12444 / CCUG 56034 / CIP 105152 / NBRC 16084 / F199).